Reading from the N-terminus, the 74-residue chain is MKAAISLLLLSALLFVVIEAITYEEGKELFQGERTDCVGDGQRCADWAGPYCCSGYYCSCRSMPYCRCRSDSGK.

Residues 1–20 form the signal peptide; the sequence is MKAAISLLLLSALLFVVIEA. A propeptide spanning residues 21–34 is cleaved from the precursor; the sequence is ITYEEGKELFQGER. 4 disulfides stabilise this stretch: Cys-37/Cys-53, Cys-44/Cys-58, Cys-52/Cys-68, and Cys-60/Cys-66. Ser-72 carries the serine amide modification.

The protein belongs to the neurotoxin 07 (Beta/delta-agtx) family. 02 (aga-3) subfamily. As to expression, expressed by the venom gland.

The protein resides in the secreted. Its function is as follows. Insecticidal neurotoxin that induces an irreversible spastic paralysis when injected into insects. Modifies presynaptic voltage-gated sodium channels (Nav), causing them to open at the normal resting potential of the nerve. This leads to spontaneous release of neurotransmitter and repetitive action potentials in motor neurons. The protein is U3-agatoxin-Ao1d of Agelena orientalis (Funnel-web spider).